We begin with the raw amino-acid sequence, 874 residues long: MSIPSILRKETLKKKDKNIDLQENNINDLVVSASRVIAPLWPISTFAAHHPWMGLEKQSFEQVANWLKEARNVDIYPSASMIHSAKAKGEIEESFLQIALSRWLDSQSFHMPRETAERFCQEALKLERLPSSLLSSPELNKLAEEINYVNTGSMKDSSMQPISSLIENQNGDNLSDILNYHIIKWCKLYLDDAGASWAMPNREKGFYRAWQHLITFDPALSKTERKVLKDWPEDALIALTKALSELGISESNMQAYLEGHLLSLPGWAGMIRWRSQQSIEEQELLIEYLAVRLSMELAIVKPYLPLKNQKVEKKVSIVPLIASWIYWGDISIEKWLQMSATEQSELLAFAYRFDENTRKKLWLEAWEQTHAEQLREKIASKQRATHDKKRVVAQLAFCIDVRSEPFRRHLEKLGPFETFGIAGFFGLPIATTELGSNDSHPSLPVILKPKHQIKELTDENECKSYEQRKMVGSSVRYTFKTMKQNVLTSMLLPEVSGPLLGLQMVTRSFVPRRVGGFIRNLRKNMLQKPDTTFSLNHVHDTNCEIPIGFTKEEKVNYVRQTLKMVGLTEGFAPLVVMCGHSSQSTNNPYAAALECGACGGAAGGFNARVFATLCNLPEVREALSAEGIKIPDDTIFAAAEHKTTVDELEWIYVPELSETAQEAFDCIEAIMPNVSQHANRERLMQLPHFKTKIKNPSKEAHRFAEDWSEIRPEWGLARNASFIIGQRELTQECDLEGRAFLHNYDWKQDESGDILANIIAGPGTVAQWINLQYYASTVAPHYYGSGNKATQTVTAGLGVMQGNASDLLPGLPWQSVMQSDRETYHSPLRLLIVIQAPTKYIERLLNNNFTFREKVQNGWVRLASVDPEGRWKNW.

Residues C398, D400, H580, and C595 each coordinate Zn(2+).

This sequence belongs to the inorganic carbon transporter (TC 9.A.2) DabA family. As to quaternary structure, forms a complex with DabB. Requires Zn(2+) as cofactor.

The protein localises to the cell membrane. Its function is as follows. Part of an energy-coupled inorganic carbon pump. This Bacillus anthracis (strain A0248) protein is Probable inorganic carbon transporter subunit DabA.